The following is a 214-amino-acid chain: Ribonuclease HII (214 aa).

The RNase H type-2 domain occupies 26–214 (EIVCGVDEAG…PVREAFDLIR (189 aa)). The a divalent metal cation site is built by D32, E33, and D124.

Belongs to the RNase HII family. Requires Mn(2+) as cofactor. Mg(2+) serves as cofactor.

The protein localises to the cytoplasm. It catalyses the reaction Endonucleolytic cleavage to 5'-phosphomonoester.. Its function is as follows. Endonuclease that specifically degrades the RNA of RNA-DNA hybrids. The chain is Ribonuclease HII from Burkholderia pseudomallei (strain 1710b).